A 187-amino-acid chain; its full sequence is UPF0301 protein VV2869 (187 aa).

The protein belongs to the UPF0301 (AlgH) family.

The polypeptide is UPF0301 protein VV2869 (Vibrio vulnificus (strain YJ016)).